Reading from the N-terminus, the 330-residue chain is Protein FAM170A (330 aa).

3 disordered regions span residues 1 to 54, 76 to 104, and 169 to 218; these read MKRR…VTST, HRDSPQPQSPLAQVQERGETPPRSQHVSL, and VGTP…AKTP. A compositionally biased stretch (polar residues) spans 174–185; sequence SDVSTRNLLSDS. The span at 189 to 200 shows a compositional bias: basic and acidic residues; that stretch reads GEEKEHEERTES. Position 217 is a phosphothreonine (threonine 217). A C2H2-type; degenerate zinc finger spans residues 228–252; that stretch reads FRCMACCRVFTTMEALQEHVQFGIR. Positions 270–330 are disordered; sequence NMESESTQDE…VFHSPKDRNS (61 aa). Residues 275 to 293 are compositionally biased toward acidic residues; sequence STQDEQEEENGNEKEEEEK. Residue serine 315 is modified to Phosphoserine.

The protein belongs to the FAM170 family. Expressed strongly in testis and brain and weakly in prostate, spleen, pancreas and uterus.

The protein localises to the nucleus. Acts as a nuclear transcription factor that positively regulates the expression of heat shock genes. Binds to heat shock promoter elements (HSE). The protein is Protein FAM170A (FAM170A) of Homo sapiens (Human).